Reading from the N-terminus, the 2291-residue chain is Protein Ycf2 A (2291 aa).

Position 1642-1649 (1642-1649 (GSIGTGRS)) interacts with ATP.

Belongs to the Ycf2 family.

Its subcellular location is the plastid. It is found in the chloroplast stroma. Its function is as follows. Probable ATPase of unknown function. Its presence in a non-photosynthetic plant (Epifagus virginiana) and experiments in tobacco indicate that it has an essential function which is probably not related to photosynthesis. In Atropa belladonna (Belladonna), this protein is Protein Ycf2 A (ycf2-A).